The chain runs to 359 residues: 3-dehydroquinate synthase (359 aa).

Residues 69 to 74 (DAETGK), 103 to 107 (GAATD), 127 to 128 (TT), Lys-140, and Lys-149 each bind NAD(+). Residues Glu-182, His-244, and His-260 each coordinate Zn(2+).

The protein belongs to the sugar phosphate cyclases superfamily. Dehydroquinate synthase family. Requires Co(2+) as cofactor. It depends on Zn(2+) as a cofactor. The cofactor is NAD(+).

It localises to the cytoplasm. It catalyses the reaction 7-phospho-2-dehydro-3-deoxy-D-arabino-heptonate = 3-dehydroquinate + phosphate. It participates in metabolic intermediate biosynthesis; chorismate biosynthesis; chorismate from D-erythrose 4-phosphate and phosphoenolpyruvate: step 2/7. Its function is as follows. Catalyzes the conversion of 3-deoxy-D-arabino-heptulosonate 7-phosphate (DAHP) to dehydroquinate (DHQ). This Corynebacterium diphtheriae (strain ATCC 700971 / NCTC 13129 / Biotype gravis) protein is 3-dehydroquinate synthase.